A 170-amino-acid polypeptide reads, in one-letter code: NADH-dependent flavin reductase StyB (170 aa).

Belongs to the non-flavoprotein flavin reductase family. As to quaternary structure, homodimer.

The catalysed reaction is a reduced flavin + NAD(+) = an oxidized flavin + NADH + 2 H(+). It functions in the pathway aromatic compound metabolism. In terms of biological role, reductase component of a two-component system that catalyzes the first step in the aerobic styrene degradation pathway by enantioselective epoxidation of the vinyl side chain. Utilizes NADH to reduce FAD, which is then transferred to the styrene monooxygenase StyA. The chain is NADH-dependent flavin reductase StyB (styB) from Pseudomonas fluorescens.